We begin with the raw amino-acid sequence, 512 residues long: Protein arginine N-methyltransferase 2 (512 aa).

A disordered region spans residues 67–103; the sequence is TSNIDDLPLPPPIQEVEEEEPTQQNIEQQQQTQDESD. Over residues 88–99 the composition is skewed to low complexity; it reads TQQNIEQQQQTQ. An SAM-dependent MTase PRMT-type domain is found at 120 to 508; the sequence is DEEYFSSYSK…KTNPFDYSYQ (389 aa). S-adenosyl-L-methionine is bound by residues His133, Arg142, Gly166, and Glu217. Catalysis depends on residues Glu231 and Glu240. Positions 375 to 395 are disordered; the sequence is DDDDNDNNNNNNDNSNDDENK.

It belongs to the class I-like SAM-binding methyltransferase superfamily. Protein arginine N-methyltransferase family.

It localises to the cytoplasm. The protein resides in the nucleus. It catalyses the reaction L-arginyl-[protein] + 2 S-adenosyl-L-methionine = N(omega),N(omega)-dimethyl-L-arginyl-[protein] + 2 S-adenosyl-L-homocysteine + 2 H(+). In terms of biological role, arginine methyltransferase that methylates the guanidino nitrogens of arginyl residues in some proteins such as histones. This Dictyostelium discoideum (Social amoeba) protein is Protein arginine N-methyltransferase 2 (prmt2).